We begin with the raw amino-acid sequence, 477 residues long: Ribulose bisphosphate carboxylase large chain (477 aa).

Residues 1 to 2 (MS) constitute a propeptide that is removed on maturation. Position 3 is an N-acetylproline (P3). At K14 the chain carries N6,N6,N6-trimethyllysine. Residues N123 and T173 each contribute to the substrate site. K175 (proton acceptor) is an active-site residue. K177 is a substrate binding site. Mg(2+) is bound by residues K201, D203, and E204. The residue at position 201 (K201) is an N6-carboxylysine. The active-site Proton acceptor is H294. Positions 295, 327, and 379 each coordinate substrate.

This sequence belongs to the RuBisCO large chain family. Type I subfamily. Heterohexadecamer of 8 large chains and 8 small chains; disulfide-linked. The disulfide link is formed within the large subunit homodimers. It depends on Mg(2+) as a cofactor. Post-translationally, the disulfide bond which can form in the large chain dimeric partners within the hexadecamer appears to be associated with oxidative stress and protein turnover.

It is found in the plastid. The protein resides in the chloroplast. The enzyme catalyses 2 (2R)-3-phosphoglycerate + 2 H(+) = D-ribulose 1,5-bisphosphate + CO2 + H2O. It carries out the reaction D-ribulose 1,5-bisphosphate + O2 = 2-phosphoglycolate + (2R)-3-phosphoglycerate + 2 H(+). In terms of biological role, ruBisCO catalyzes two reactions: the carboxylation of D-ribulose 1,5-bisphosphate, the primary event in carbon dioxide fixation, as well as the oxidative fragmentation of the pentose substrate in the photorespiration process. Both reactions occur simultaneously and in competition at the same active site. The polypeptide is Ribulose bisphosphate carboxylase large chain (Nicotiana tomentosiformis (Tobacco)).